The chain runs to 387 residues: O-methyltransferase asqD (387 aa).

Aspartate 252 serves as a coordination point for S-adenosyl-L-methionine. The active-site Proton acceptor is the histidine 294.

The protein belongs to the class I-like SAM-binding methyltransferase superfamily. Cation-independent O-methyltransferase family.

It functions in the pathway secondary metabolite biosynthesis. The protein operates within alkaloid biosynthesis. It participates in mycotoxin biosynthesis. Its function is as follows. O-methyltransferase; part of the gene cluster that mediates the biosynthesis of the aspoquinolone mycotoxins. The role of asqD within the aspoquinolone pathway has still to be determined. The first step of the pathway is catalyzed by the nonribosomal peptide synthetase asqK that condenses anthranilic acid and O-methyl-L-tyrosine to produce 4'-methoxycyclopeptin. 4'-methoxycyclopeptin is then converted to 4'-methoxydehydrocyclopeptin by the ketoglutarate-dependent dioxygenase asqJ. AsqJ also converts its first product 4'-methoxydehydrocyclopeptin to 4'-methoxycyclopenin. The following conversion of 4'-methoxycyclopenin into 4'-methoxyviridicatin is catalyzed by the cyclopenase asqI. 4'-methoxyviridicatin is the precursor of quinolone natural products, and is further converted to quinolinone B. The prenyltransferase asqH1 then catalyzes the canonical Friedel-Crafts alkylation of quinolinone B with dimethylallyl cation to yield dimethylallyl quinolone, which is subjected to FAD-dependent dehydrogenation by the FAD-linked oxidoreductase asqF to yield conjugated aryl diene. The delta(3') double bond then serves as the site of the second alkylation with DMAPP catalyzed by the prenyltransferase asqH2 to yield a carbenium ion intermediate, which can be attacked by H(2)O to yield a styrenyl quinolone containing a C3'-hydroxyprenyl chain. The FAD-dependent monooxygenase asqG performs epoxidation of the terminal C7'-C8' olefin. Finally, after dehydratation of the epoxide at C3 by asqC, the quinolone epoxide rearrangement protein asqO catalyzes an enzymatic 3-exo-tet cyclization to yield the cyclopropyl-THF ring system in aspoquinolone. In Emericella nidulans (strain FGSC A4 / ATCC 38163 / CBS 112.46 / NRRL 194 / M139) (Aspergillus nidulans), this protein is O-methyltransferase asqD.